The chain runs to 359 residues: sn-1 linoleoyl-lipid 6-desaturase (359 aa).

2 helical membrane-spanning segments follow: residues 45–65 (LIIV…PVIF) and 69–89 (LLGC…VGHD). Positions 88–92 (HDANH) match the Histidine box-1 motif. The Histidine box-2 signature appears at 123 to 128 (HNYLHH). 3 helical membrane passes run 165 to 185 (IWGL…YLVL), 206 to 226 (LLGI…ALGF), and 231 to 251 (VLIG…TIFM). The short motif at 306–310 (HHLFP) is the Histidine box-3 element.

It belongs to the fatty acid desaturase type 2 family. Fe(2+) serves as cofactor.

Its subcellular location is the membrane. The enzyme catalyses a 1-[(9Z,12Z)-octadecdienoyl]-2-acyl-glycerolipid + 2 reduced [2Fe-2S]-[ferredoxin] + O2 + 2 H(+) = a 1-[(6Z,9Z,12Z)-octadectrienoyl]-2-acyl-glycerolipid + 2 oxidized [2Fe-2S]-[ferredoxin] + 2 H2O. The protein operates within lipid metabolism; polyunsaturated fatty acid biosynthesis. Desaturase involved in fatty acid biosynthesis. Introduces a double bond at carbon 6 of linoleoyl group (18:2) attached to the sn-1 position of the glycerol moiety of membrane glycerolipids, leading to the formation of gamma-linolenic acid (GLA). The sequence is that of sn-1 linoleoyl-lipid 6-desaturase from Synechocystis sp. (strain ATCC 27184 / PCC 6803 / Kazusa).